Here is a 106-residue protein sequence, read N- to C-terminus: uncharacterized protein (106 aa).

Helical transmembrane passes span 3 to 23 (WFLLVIAGIEEIIAAIAMKYI), 29 to 49 (KWPIIVMTVGFGLSFYCLSQA), 50 to 70 (MIVLPAGVAYAVWTGIGSIGV), and 82 to 102 (FQLSQVISLCLILAGVIGLRL).

Belongs to the drug/metabolite transporter (DMT) superfamily. Small multidrug resistance (SMR) (TC 2.A.7.1) family.

The protein localises to the cell membrane. This is an uncharacterized protein from Bacillus subtilis (strain 168).